The following is an 842-amino-acid chain: DNA gyrase subunit A (842 aa).

Residues 42–511 (LPEVRDGLKP…ADGEVSDEDL (470 aa)) enclose the Topo IIA-type catalytic domain. Catalysis depends on tyrosine 130, which acts as the O-(5'-phospho-DNA)-tyrosine intermediate. Positions 538–544 (QKRGGKG) match the GyrA-box motif. Residues 822 to 842 (EDEAAESISESDADTAESPEA) form a disordered region.

Belongs to the type II topoisomerase GyrA/ParC subunit family. In terms of assembly, heterotetramer, composed of two GyrA and two GyrB chains. In the heterotetramer, GyrA contains the active site tyrosine that forms a transient covalent intermediate with DNA, while GyrB binds cofactors and catalyzes ATP hydrolysis.

It is found in the cytoplasm. It carries out the reaction ATP-dependent breakage, passage and rejoining of double-stranded DNA.. With respect to regulation, inhibited by 4-quinoline drugs (nalidixic acid, ciprofloxacin, ofloxacin), although it is much less sensitive than the corresponding enzyme from E.coli. A type II topoisomerase that negatively supercoils closed circular double-stranded (ds) DNA in an ATP-dependent manner to modulate DNA topology and maintain chromosomes in an underwound state. Negative supercoiling favors strand separation, and DNA replication, transcription, recombination and repair, all of which involve strand separation. Also able to catalyze the interconversion of other topological isomers of dsDNA rings, including catenanes and knotted rings. Type II topoisomerases break and join 2 DNA strands simultaneously in an ATP-dependent manner. This is DNA gyrase subunit A from Mycolicibacterium smegmatis (strain ATCC 700084 / mc(2)155) (Mycobacterium smegmatis).